The following is a 163-amino-acid chain: Crossover junction endodeoxyribonuclease RuvC (163 aa).

Active-site residues include D9, E76, and D148. Residues D9, E76, and D148 each coordinate Mg(2+).

Belongs to the RuvC family. As to quaternary structure, homodimer which binds Holliday junction (HJ) DNA. The HJ becomes 2-fold symmetrical on binding to RuvC with unstacked arms; it has a different conformation from HJ DNA in complex with RuvA. In the full resolvosome a probable DNA-RuvA(4)-RuvB(12)-RuvC(2) complex forms which resolves the HJ. Requires Mg(2+) as cofactor.

Its subcellular location is the cytoplasm. It carries out the reaction Endonucleolytic cleavage at a junction such as a reciprocal single-stranded crossover between two homologous DNA duplexes (Holliday junction).. Its function is as follows. The RuvA-RuvB-RuvC complex processes Holliday junction (HJ) DNA during genetic recombination and DNA repair. Endonuclease that resolves HJ intermediates. Cleaves cruciform DNA by making single-stranded nicks across the HJ at symmetrical positions within the homologous arms, yielding a 5'-phosphate and a 3'-hydroxyl group; requires a central core of homology in the junction. The consensus cleavage sequence is 5'-(A/T)TT(C/G)-3'. Cleavage occurs on the 3'-side of the TT dinucleotide at the point of strand exchange. HJ branch migration catalyzed by RuvA-RuvB allows RuvC to scan DNA until it finds its consensus sequence, where it cleaves and resolves the cruciform DNA. This chain is Crossover junction endodeoxyribonuclease RuvC, found in Trichormus variabilis (strain ATCC 29413 / PCC 7937) (Anabaena variabilis).